The chain runs to 398 residues: Bifunctional enzyme IspD/IspF (398 aa).

The interval 1–234 is 2-C-methyl-D-erythritol 4-phosphate cytidylyltransferase; sequence MPNPPRTAAI…SRLTALLGDI (234 aa). The segment at 235–398 is 2-C-methyl-D-erythritol 2,4-cyclodiphosphate synthase; it reads RTGTGYDVHA…LPWGAEGLAG (164 aa). Residues Asp241 and His243 each contribute to the a divalent metal cation site. 4-CDP-2-C-methyl-D-erythritol 2-phosphate contacts are provided by residues 241-243 and 267-268; these read DVH and HS. His275 provides a ligand contact to a divalent metal cation. Residues 289 to 291, 365 to 368, Phe372, and Arg375 each bind 4-CDP-2-C-methyl-D-erythritol 2-phosphate; these read DIG and TTSE.

In the N-terminal section; belongs to the IspD/TarI cytidylyltransferase family. IspD subfamily. It in the C-terminal section; belongs to the IspF family. The cofactor is a divalent metal cation.

The enzyme catalyses 2-C-methyl-D-erythritol 4-phosphate + CTP + H(+) = 4-CDP-2-C-methyl-D-erythritol + diphosphate. The catalysed reaction is 4-CDP-2-C-methyl-D-erythritol 2-phosphate = 2-C-methyl-D-erythritol 2,4-cyclic diphosphate + CMP. It functions in the pathway isoprenoid biosynthesis; isopentenyl diphosphate biosynthesis via DXP pathway; isopentenyl diphosphate from 1-deoxy-D-xylulose 5-phosphate: step 2/6. The protein operates within isoprenoid biosynthesis; isopentenyl diphosphate biosynthesis via DXP pathway; isopentenyl diphosphate from 1-deoxy-D-xylulose 5-phosphate: step 4/6. In terms of biological role, bifunctional enzyme that catalyzes the formation of 4-diphosphocytidyl-2-C-methyl-D-erythritol from CTP and 2-C-methyl-D-erythritol 4-phosphate (MEP) (IspD), and catalyzes the conversion of 4-diphosphocytidyl-2-C-methyl-D-erythritol 2-phosphate (CDP-ME2P) to 2-C-methyl-D-erythritol 2,4-cyclodiphosphate (ME-CPP) with a corresponding release of cytidine 5-monophosphate (CMP) (IspF). This is Bifunctional enzyme IspD/IspF from Rhodopseudomonas palustris (strain BisB5).